A 144-amino-acid chain; its full sequence is Large ribosomal subunit protein uL15 (144 aa).

The tract at residues 1–54 is disordered; the sequence is MRLNTLSPAAGAKHAPKRVGRGMGSGLGKTAGRGHKGQKSRSGGGVRPGFEGGQ. 2 stretches are compositionally biased toward gly residues: residues 21-31 and 42-52; these read RGMGSGLGKTA and SGGGVRPGFEG.

This sequence belongs to the universal ribosomal protein uL15 family. In terms of assembly, part of the 50S ribosomal subunit.

Binds to the 23S rRNA. This Shewanella oneidensis (strain ATCC 700550 / JCM 31522 / CIP 106686 / LMG 19005 / NCIMB 14063 / MR-1) protein is Large ribosomal subunit protein uL15.